A 349-amino-acid chain; its full sequence is Holliday junction branch migration complex subunit RuvB (349 aa).

The interval 1 to 186 (MSEDYLDRDV…FGFTAHMDFY (186 aa)) is large ATPase domain (RuvB-L). ATP is bound by residues L25, R26, G67, K70, T71, S72, 133–135 (EDF), R176, Y186, and R223. T71 provides a ligand contact to Mg(2+). The small ATPAse domain (RuvB-S) stretch occupies residues 187 to 257 (EPTELEGVLA…VAKAALAVYD (71 aa)). The interval 260–349 (ELGLDRLDRA…GLSQPGLFES (90 aa)) is head domain (RuvB-H). Residues R315 and R320 each coordinate DNA.

It belongs to the RuvB family. Homohexamer. Forms an RuvA(8)-RuvB(12)-Holliday junction (HJ) complex. HJ DNA is sandwiched between 2 RuvA tetramers; dsDNA enters through RuvA and exits via RuvB. An RuvB hexamer assembles on each DNA strand where it exits the tetramer. Each RuvB hexamer is contacted by two RuvA subunits (via domain III) on 2 adjacent RuvB subunits; this complex drives branch migration. In the full resolvosome a probable DNA-RuvA(4)-RuvB(12)-RuvC(2) complex forms which resolves the HJ.

The protein localises to the cytoplasm. The enzyme catalyses ATP + H2O = ADP + phosphate + H(+). In terms of biological role, the RuvA-RuvB-RuvC complex processes Holliday junction (HJ) DNA during genetic recombination and DNA repair, while the RuvA-RuvB complex plays an important role in the rescue of blocked DNA replication forks via replication fork reversal (RFR). RuvA specifically binds to HJ cruciform DNA, conferring on it an open structure. The RuvB hexamer acts as an ATP-dependent pump, pulling dsDNA into and through the RuvAB complex. RuvB forms 2 homohexamers on either side of HJ DNA bound by 1 or 2 RuvA tetramers; 4 subunits per hexamer contact DNA at a time. Coordinated motions by a converter formed by DNA-disengaged RuvB subunits stimulates ATP hydrolysis and nucleotide exchange. Immobilization of the converter enables RuvB to convert the ATP-contained energy into a lever motion, pulling 2 nucleotides of DNA out of the RuvA tetramer per ATP hydrolyzed, thus driving DNA branch migration. The RuvB motors rotate together with the DNA substrate, which together with the progressing nucleotide cycle form the mechanistic basis for DNA recombination by continuous HJ branch migration. Branch migration allows RuvC to scan DNA until it finds its consensus sequence, where it cleaves and resolves cruciform DNA. This chain is Holliday junction branch migration complex subunit RuvB, found in Mycobacterium leprae (strain Br4923).